Consider the following 229-residue polypeptide: 7-cyano-7-deazaguanine synthase (229 aa).

15–25 contacts ATP; it reads LSGGLDSATVV. Zn(2+) contacts are provided by cysteine 194, cysteine 204, cysteine 207, and cysteine 210.

This sequence belongs to the QueC family. It depends on Zn(2+) as a cofactor.

The enzyme catalyses 7-carboxy-7-deazaguanine + NH4(+) + ATP = 7-cyano-7-deazaguanine + ADP + phosphate + H2O + H(+). The protein operates within purine metabolism; 7-cyano-7-deazaguanine biosynthesis. Its function is as follows. Catalyzes the ATP-dependent conversion of 7-carboxy-7-deazaguanine (CDG) to 7-cyano-7-deazaguanine (preQ(0)). This is 7-cyano-7-deazaguanine synthase from Pseudomonas syringae pv. syringae (strain B728a).